We begin with the raw amino-acid sequence, 85 residues long: Toxin BmKITc (85 aa).

Residues 1–21 form the signal peptide; it reads MKLFLLLVIFASMLNDGLVNA. The 61-residue stretch at 22 to 82 folds into the LCN-type CS-alpha/beta domain; sequence DGYIRGSDGC…KWKYESNTCG (61 aa). 4 disulfide bridges follow: cysteine 31–cysteine 81, cysteine 35–cysteine 56, cysteine 42–cysteine 63, and cysteine 46–cysteine 65.

The protein belongs to the long (4 C-C) scorpion toxin superfamily. Sodium channel inhibitor family. Beta subfamily. As to expression, expressed by the venom gland.

It localises to the secreted. Functionally, depressant insect beta-toxins cause a transient contraction paralysis followed by a slow flaccid paralysis. They bind voltage-independently at site-4 of sodium channels (Nav) and shift the voltage of activation toward more negative potentials thereby affecting sodium channel activation and promoting spontaneous and repetitive firing. The polypeptide is Toxin BmKITc (Olivierus martensii (Manchurian scorpion)).